Reading from the N-terminus, the 682-residue chain is Potassium-transporting ATPase ATP-binding subunit (682 aa).

Transmembrane regions (helical) follow at residues 35-55 (VMFI…AMAG), 62-82 (ATFT…ANFA), 219-239 (IALT…TATI), and 254-274 (VLVA…LSAI). Residue D307 is the 4-aspartylphosphate intermediate of the active site. Residues D344, E348, 377 to 384 (FTAQTRMS), and K395 contribute to the ATP site. Residues D518 and D522 each contribute to the Mg(2+) site. Helical transmembrane passes span 588–608 (FAII…LNVM), 616–636 (AILS…PLAL), and 656–676 (IYGL…DLLL).

It belongs to the cation transport ATPase (P-type) (TC 3.A.3) family. Type IA subfamily. As to quaternary structure, the system is composed of three essential subunits: KdpA, KdpB and KdpC.

It localises to the cell inner membrane. It catalyses the reaction K(+)(out) + ATP + H2O = K(+)(in) + ADP + phosphate + H(+). Part of the high-affinity ATP-driven potassium transport (or Kdp) system, which catalyzes the hydrolysis of ATP coupled with the electrogenic transport of potassium into the cytoplasm. This subunit is responsible for energy coupling to the transport system and for the release of the potassium ions to the cytoplasm. This chain is Potassium-transporting ATPase ATP-binding subunit, found in Klebsiella pneumoniae (strain 342).